A 717-amino-acid polypeptide reads, in one-letter code: DNA polymerase iota (717 aa).

The interval 1–22 (MEPLHAGAAGSSRAVCSQGPPT) is disordered. The 214-residue stretch at 30–243 (IVHVDLDCFY…NHIKEIPGIG (214 aa)) folds into the UmuC domain. Mg(2+)-binding residues include D34 and L35. Residues Y39 and R71 each coordinate a 2'-deoxyribonucleoside 5'-triphosphate. Mg(2+) is bound at residue D126. The Proton acceptor role is filled by E127. 2 DNA-binding regions span residues 300-307 (QSFSEEDT) and 343-360 (RLVI…ESRQ). Residues 500-517 (VDQEVFKQLPADIQEEIL) carry the Ubiquitin-binding 1 (UBM1) motif. 3 disordered regions span residues 549 to 589 (QMQA…SHPS), 603 to 622 (KDEQ…FSST), and 644 to 687 (HRTV…DIDP). Over residues 575-589 (PGTSGLSPGSTSHPS) the composition is skewed to low complexity. Polar residues-rich tracts occupy residues 607–622 (TSQG…FSST) and 652–662 (QTATASHQGLE). The segment covering 665-679 (QGLESRELDSAEEKL) has biased composition (basic and acidic residues). A Ubiquitin-binding 2 (UBM2) motif is present at residues 685-702 (IDPQVFYELPEEVQKELM).

Belongs to the DNA polymerase type-Y family. In terms of assembly, interacts with POLH. Interacts with REV1. Interacts with ubiquitin. The cofactor is Mg(2+). It depends on Mn(2+) as a cofactor. In terms of processing, monoubiquitinated. Protein monoubiquitination prevents POLI binding to ubiquitin via the ubiquitin-binding motif 1 and ubiquitin-binding motif 2. As to expression, detected in testis, and at very low levels in spleen, lung and brain. Detected in round spermatids, but not in prophase spermatocytes.

The protein localises to the nucleus. The enzyme catalyses DNA(n) + a 2'-deoxyribonucleoside 5'-triphosphate = DNA(n+1) + diphosphate. In terms of biological role, error-prone DNA polymerase specifically involved in DNA repair. Plays an important role in translesion synthesis, where the normal high-fidelity DNA polymerases cannot proceed and DNA synthesis stalls. Favors Hoogsteen base-pairing in the active site. Inserts the correct base with high-fidelity opposite an adenosine template. Exhibits low fidelity and efficiency opposite a thymidine template, where it will preferentially insert guanosine. May play a role in hypermutation of immunoglobulin genes. Forms a Schiff base with 5'-deoxyribose phosphate at abasic sites, but may not have lyase activity. The polypeptide is DNA polymerase iota (Poli) (Mus musculus (Mouse)).